The following is a 177-amino-acid chain: von Ebner gland protein 2 (177 aa).

The first 18 residues, 1-18, serve as a signal peptide directing secretion; that stretch reads MKALLLTFSLSLLAALQA. Cys-80 and Cys-172 form a disulfide bridge.

It belongs to the calycin superfamily. Lipocalin family. Homodimer.

The protein resides in the secreted. Functionally, could play a role in taste reception. Could be necessary for the concentration and delivery of sapid molecules in the gustatory system. In Rattus norvegicus (Rat), this protein is von Ebner gland protein 2 (Vegp2).